Here is a 61-residue protein sequence, read N- to C-terminus: Small ribosomal subunit protein uS14 (61 aa).

Zn(2+) contacts are provided by Cys-24, Cys-27, Cys-40, and Cys-43.

This sequence belongs to the universal ribosomal protein uS14 family. Zinc-binding uS14 subfamily. In terms of assembly, part of the 30S ribosomal subunit. Contacts proteins S3 and S10. The cofactor is Zn(2+).

Functionally, binds 16S rRNA, required for the assembly of 30S particles and may also be responsible for determining the conformation of the 16S rRNA at the A site. In Mycoplasma pneumoniae (strain ATCC 29342 / M129 / Subtype 1) (Mycoplasmoides pneumoniae), this protein is Small ribosomal subunit protein uS14.